The following is a 583-amino-acid chain: L-galactono-1,4-lactone dehydrogenase 2, mitochondrial (583 aa).

The N-terminal 36 residues, 1–36 (MRRLLLAGILRRASSSPSSHHHLHLVRALSASSPLP), are a transit peptide targeting the mitochondrion. The propeptide at 37-78 (ASDADLRKYAGYALLLLGCGAATYYSFPLPPDALHKKAVPFK) is removed in mature form. The chain crosses the membrane as a helical span at residues 45 to 61 (YAGYALLLLGCGAATYY). The region spanning 95–266 (THEVHTRVLL…AEVTLQCVER (172 aa)) is the FAD-binding PCMH-type domain.

Requires FAD as cofactor.

The protein resides in the mitochondrion membrane. It catalyses the reaction L-galactono-1,4-lactone + 4 Fe(III)-[cytochrome c] = L-dehydroascorbate + 4 Fe(II)-[cytochrome c] + 5 H(+). The protein operates within cofactor biosynthesis; L-ascorbate biosynthesis. Functionally, involved in the biosynthesis of ascorbic acid. The protein is L-galactono-1,4-lactone dehydrogenase 2, mitochondrial (GLDH2) of Oryza sativa subsp. japonica (Rice).